Consider the following 176-residue polypeptide: Ribosome maturation factor RimM (176 aa).

Residues 99–176 (EDEYYWSDLV…RMVVDWERDF (78 aa)) enclose the PRC barrel domain.

It belongs to the RimM family. As to quaternary structure, binds ribosomal protein uS19.

Its subcellular location is the cytoplasm. Its function is as follows. An accessory protein needed during the final step in the assembly of 30S ribosomal subunit, possibly for assembly of the head region. Essential for efficient processing of 16S rRNA. May be needed both before and after RbfA during the maturation of 16S rRNA. It has affinity for free ribosomal 30S subunits but not for 70S ribosomes. The chain is Ribosome maturation factor RimM from Psychrobacter sp. (strain PRwf-1).